A 990-amino-acid polypeptide reads, in one-letter code: Chondroitin sulfate ABC exolyase (990 aa).

The active-site Proton acceptor is histidine 453. The active-site Proton donor is the tyrosine 460.

This sequence belongs to the polysaccharide lyase 8 family.

The catalysed reaction is Exolytic removal of Delta(4)-unsaturated disaccharide residues from the non-reducing ends of both polymeric chondroitin/dermatan sulfates and their oligosaccharide fragments.. With respect to regulation, inhibited by Zn(2+), whereas Ni(2+), Fe(2+), and Cu(2+) have little or no effect on activity. Broad-specificity glycosaminoglycan lyase, which acts in an exolytic fashion, and preferentially degrades the tetra- and hexasaccharide derivatives of chondroitin sulfate and dermatan sulfate produced by the chondroitin sulfate ABC endolyase, to yield the respective disaccharides. To a lesser extent, is also able to split off disaccharide residues directly from polymeric chondroitin 4- and 6-sulfate, dermatan sulfate, chondroitin, and hyaluronan. Is not active against keratan sulfate, heparan sulfate, and heparin. This Proteus vulgaris protein is Chondroitin sulfate ABC exolyase (ChABCII).